We begin with the raw amino-acid sequence, 594 residues long: Transcription factor TFIIIB component B'' (594 aa).

Residues 1–169 (MSSIVNKSGT…ARRLSTISNK (169 aa)) form a disordered region. A Phosphoserine modification is found at S49. Polar residues predominate over residues 150–168 (LDSSSNSNGTARRLSTISN). The residue at position 178 (S178) is a Phosphoserine. Disordered regions lie at residues 217–245 (SPPT…DENE) and 317–343 (ARQE…KEER). Composition is skewed to basic and acidic residues over residues 225 to 241 (SLDR…SREA) and 317 to 330 (ARQE…LTKE). The region spanning 415-466 (SYTDPWTVEEMIKFYKALSMWGTDFNLISQLYPYRSRKQVKAKFVNEEKKRP) is the SANT domain. Residues 520-529 (KNTAKEEDQT) are compositionally biased toward basic and acidic residues. 2 disordered regions span residues 520-547 (KNTA…GGIM) and 567-594 (LKRK…EIDQ). Acidic residues predominate over residues 579–594 (DNEDNEGSEEEPEIDQ).

Belongs to the TFC5 family. TFIIIB comprises the TATA-binding protein (TBP), the B-related factor (BRF) and the B'' component (BDP1). Interacts with TFC4.

It localises to the nucleus. Functionally, general activator of RNA polymerase III transcription. This is Transcription factor TFIIIB component B'' (BDP1) from Saccharomyces cerevisiae (strain ATCC 204508 / S288c) (Baker's yeast).